Here is a 216-residue protein sequence, read N- to C-terminus: Ribosomal RNA small subunit methyltransferase G (216 aa).

S-adenosyl-L-methionine contacts are provided by residues glycine 73, leucine 78, 124 to 125 (AE), and arginine 139.

The protein belongs to the methyltransferase superfamily. RNA methyltransferase RsmG family.

It is found in the cytoplasm. Functionally, specifically methylates the N7 position of guanine in position 518 of 16S rRNA. The chain is Ribosomal RNA small subunit methyltransferase G from Pseudarthrobacter chlorophenolicus (strain ATCC 700700 / DSM 12829 / CIP 107037 / JCM 12360 / KCTC 9906 / NCIMB 13794 / A6) (Arthrobacter chlorophenolicus).